Consider the following 421-residue polypeptide: Core-capsid bridging protein (421 aa).

Belongs to the adenoviridae core-capsid bridging protein family. Monomer. Homodimer. Exists in equilibrium between monomers and dimers in solution. Interacts with the histone-like nucleoprotein; this interactions bridge the virus core to the capsid. Interacts with core protein X; this interactions bridge the virus core to the capsid. Interacts with the endosome lysis protein VI; this interactions bridge the virus core to the capsid. Interacts with the peripentonal hexons. Interacts with host NPM1; this interaction might play a role in virus assembly.

The protein localises to the virion. It is found in the host nucleus. It localises to the host nucleolus. Associates loosely with the viral DNA to form an outer shell around the nucleoprotein-DNA complex and links it with the capsid by binding the endosome lysis protein. Dissociates from the viral genome during entry. Might be involved in nuclear capsid assembly of the viral particles through its association with NPM1/nucleophosmin. The polypeptide is Core-capsid bridging protein (Canine adenovirus serotype 1 (strain RI261) (CAdV-1)).